A 122-amino-acid chain; its full sequence is Large ribosomal subunit protein bL12 (122 aa).

It belongs to the bacterial ribosomal protein bL12 family. In terms of assembly, homodimer. Part of the ribosomal stalk of the 50S ribosomal subunit. Forms a multimeric L10(L12)X complex, where L10 forms an elongated spine to which 2 to 4 L12 dimers bind in a sequential fashion. Binds GTP-bound translation factors.

Its function is as follows. Forms part of the ribosomal stalk which helps the ribosome interact with GTP-bound translation factors. Is thus essential for accurate translation. The protein is Large ribosomal subunit protein bL12 of Deinococcus geothermalis (strain DSM 11300 / CIP 105573 / AG-3a).